Consider the following 143-residue polypeptide: Transcriptional regulator MraZ (143 aa).

SpoVT-AbrB domains are found at residues 5 to 47 and 76 to 119; these read TYTP…PREE and TDEQ…DAQA.

The protein belongs to the MraZ family. In terms of assembly, forms oligomers.

The protein resides in the cytoplasm. It is found in the nucleoid. The sequence is that of Transcriptional regulator MraZ from Rhodococcus jostii (strain RHA1).